Reading from the N-terminus, the 339-residue chain is DNA-directed RNA polymerase subunit alpha (339 aa).

The tract at residues 1–233 is alpha N-terminal domain (alpha-NTD); it reads MVREEVAGST…DLFLPFLHAE (233 aa). The interval 264 to 339 is alpha C-terminal domain (alpha-CTD); that stretch reads KKGIPLNCIF…IDLLKNKLSF (76 aa).

This sequence belongs to the RNA polymerase alpha chain family. In terms of assembly, in plastids the minimal PEP RNA polymerase catalytic core is composed of four subunits: alpha, beta, beta', and beta''. When a (nuclear-encoded) sigma factor is associated with the core the holoenzyme is formed, which can initiate transcription.

The protein resides in the plastid. It is found in the chloroplast. It carries out the reaction RNA(n) + a ribonucleoside 5'-triphosphate = RNA(n+1) + diphosphate. DNA-dependent RNA polymerase catalyzes the transcription of DNA into RNA using the four ribonucleoside triphosphates as substrates. In Elymus californicus (California bottlebrush grass), this protein is DNA-directed RNA polymerase subunit alpha.